The following is a 215-amino-acid chain: Dual specificity phosphatase 29 (215 aa).

Residues 53–201 (HVNEVWPRLH…LRELDKQLVK (149 aa)) enclose the Tyrosine-protein phosphatase domain. 145–152 (HCAMGRSR) serves as a coordination point for substrate. Cys146 functions as the Phosphocysteine intermediate in the catalytic mechanism.

It belongs to the protein-tyrosine phosphatase family. Non-receptor class dual specificity subfamily. In terms of assembly, homodimer. Interacts with PRKAA2.

Its subcellular location is the cytoplasm. It localises to the nucleus. The catalysed reaction is O-phospho-L-tyrosyl-[protein] + H2O = L-tyrosyl-[protein] + phosphate. The enzyme catalyses O-phospho-L-seryl-[protein] + H2O = L-seryl-[protein] + phosphate. It carries out the reaction O-phospho-L-threonyl-[protein] + H2O = L-threonyl-[protein] + phosphate. Functionally, dual specificity phosphatase able to dephosphorylate phosphotyrosine, phosphoserine and phosphothreonine residues within the same substrate, with a preference for phosphotyrosine as a substrate. Involved in the modulation of intracellular signaling cascades. In skeletal muscle regulates systemic glucose homeostasis by activating, AMPK, an energy sensor protein kinase. Affects MAP kinase signaling though modulation of the MAPK1/2 cascade in skeletal muscle promoting muscle cell differentiation, development and atrophy. The protein is Dual specificity phosphatase 29 (Dusp29) of Rattus norvegicus (Rat).